Here is a 428-residue protein sequence, read N- to C-terminus: Glutamate--tRNA ligase 2 (428 aa).

Positions 6–16 (PSPTGDMRTEQ) match the 'HIGH' region motif.

It belongs to the class-I aminoacyl-tRNA synthetase family. Glutamate--tRNA ligase type 1 subfamily. Monomer.

Its subcellular location is the cytoplasm. The catalysed reaction is tRNA(Glu) + L-glutamate + ATP = L-glutamyl-tRNA(Glu) + AMP + diphosphate. Its function is as follows. Catalyzes the attachment of glutamate to tRNA(Glu) in a two-step reaction: glutamate is first activated by ATP to form Glu-AMP and then transferred to the acceptor end of tRNA(Glu). The sequence is that of Glutamate--tRNA ligase 2 from Sulfurovum sp. (strain NBC37-1).